The chain runs to 194 residues: Histone H1.0 (194 aa).

Met1 is modified (N-acetylmethionine). Over residues 1–11 the composition is skewed to low complexity; it reads MTENSTSAPAA. A disordered region spans residues 1–28; that stretch reads MTENSTSAPAAKPKRAKASKKSTDHPKY. Thr2 bears the N-acetylthreonine; in Histone H1.0, N-terminally processed mark. Positions 24-97 constitute an H15 domain; sequence DHPKYSDMIV…GASGSFRLAK (74 aa). Arg42 is modified (citrulline). Positions 86–194 are disordered; the sequence is GVGASGSFRL…SSAKRASKKK (109 aa). Ser104 bears the ADP-ribosylserine mark. Positions 105-194 are enriched in basic residues; that stretch reads VAFKKTKKEV…SSAKRASKKK (90 aa).

The protein belongs to the histone H1/H5 family. Post-translationally, ADP-ribosylated on Ser-104 in response to DNA damage.

The protein resides in the nucleus. It localises to the chromosome. Its function is as follows. Histones H1 are necessary for the condensation of nucleosome chains into higher-order structures. The histones H1.0 are found in cells that are in terminal stages of differentiation or that have low rates of cell division. The protein is Histone H1.0 (H1-0) of Mus musculus (Mouse).